Consider the following 401-residue polypeptide: cAMP-dependent protein kinase type II-alpha regulatory subunit (401 aa).

At Ser-2 the chain carries N-acetylserine. Positions 2–135 (SHIQIPPGLT…RLQEACKDIL (134 aa)) are dimerization and phosphorylation. The segment at 43–65 (ARSRASTPPAAPPSGSQDFDPGA) is disordered. Residues 46–58 (RASTPPAAPPSGS) are compositionally biased toward low complexity. A phosphoserine mark is found at Ser-48, Ser-75, and Ser-77. Ser-96 carries the phosphoserine; by PKA modification. 3',5'-cyclic AMP is bound by residues 136–257 (LFKN…ESVP), Glu-205, Arg-214, 258–401 (LLKS…DPGQ), Glu-335, and Arg-344. Position 212 is a phosphothreonine; by PDPK1 (Thr-212). Phosphoserine occurs at positions 347 and 392.

Belongs to the cAMP-dependent kinase regulatory chain family. As to quaternary structure, the inactive form of the enzyme is composed of two regulatory chains and two catalytic chains. Activation by cAMP produces two active catalytic monomers and a regulatory dimer that binds four cAMP molecules. Interacts with AKAP4 and CBFA2T3. Interacts with the phosphorylated form of PJA2. Interacts with MYRIP; this interaction may link PKA to components of the exocytosis machinery, thus facilitating exocytosis, including insulin release. Forms a complex composed of PRKAR2A, GSK3B and GSKIP through GSKIP interaction; facilitates PKA-induced phosphorylation and regulates GSK3B activity. Interacts with ADCY8; inhibits adenylate cyclase activity through PKA phosphorylation. Post-translationally, a second phosphorylation site has not been located. Phosphorylation of Thr-212 by PDPK1 seems to attenuate the activity of PKA, perhaps by strengthening interaction between the regulatory and the catalytic subunits. As to expression, four types of regulatory chains are found: I-alpha, I-beta, II-alpha, and II-beta. Their expression varies among tissues and is in some cases constitutive and in others inducible.

It is found in the cytoplasm. The protein resides in the cell membrane. Functionally, regulatory subunit of the cAMP-dependent protein kinases involved in cAMP signaling in cells. Type II regulatory chains mediate membrane association by binding to anchoring proteins, including the MAP2 kinase. This chain is cAMP-dependent protein kinase type II-alpha regulatory subunit (PRKAR2A), found in Bos taurus (Bovine).